The chain runs to 910 residues: Dimethylsulfide dehydrogenase subunit alpha (910 aa).

Residues 1 to 28 (MLRTTRRTLMQGASLVGAGLFAAGRGWA) constitute a signal peptide (tat-type signal). Positions 59–123 (DYVGKAAHCI…IHSTSMYEAD (65 aa)) constitute a 4Fe-4S Mo/W bis-MGD-type domain. Positions 66, 70, 74, and 109 each coordinate [4Fe-4S] cluster.

This sequence belongs to the prokaryotic molybdopterin-containing oxidoreductase family. As to quaternary structure, heterotrimer of alpha, beta and gamma subunits. [4Fe-4S] cluster is required as a cofactor. It depends on Mo-bis(molybdopterin guanine dinucleotide) as a cofactor. Post-translationally, predicted to be exported by the Tat system. The position of the signal peptide cleavage has been experimentally proven.

Its subcellular location is the periplasm. The enzyme catalyses 2 Fe(III)-[cytochrome c2] + dimethyl sulfide + H2O = 2 Fe(II)-[cytochrome c2] + dimethyl sulfoxide + 2 H(+). Allows photoautotrophic growth on dimethyl sulfide (DMS) as the sole electron donor. The chain is Dimethylsulfide dehydrogenase subunit alpha (ddhA) from Rhodovulum sulfidophilum (Rhodobacter sulfidophilus).